The chain runs to 366 residues: Chalcone synthase B (366 aa).

Residue C172 is part of the active site.

The protein belongs to the thiolase-like superfamily. Chalcone/stilbene synthases family.

It carries out the reaction (E)-4-coumaroyl-CoA + 3 malonyl-CoA + 3 H(+) = 2',4,4',6'-tetrahydroxychalcone + 3 CO2 + 4 CoA. Its pathway is secondary metabolite biosynthesis; flavonoid biosynthesis. Its function is as follows. The primary product of this enzyme is 4,2',4',6'-tetrahydroxychalcone (also termed naringenin-chalcone or chalcone) which can under specific conditions spontaneously isomerize into naringenin. The protein is Chalcone synthase B (CHSB) of Ipomoea triloba (Trilobed morning glory).